A 446-amino-acid polypeptide reads, in one-letter code: Signal recognition particle protein (446 aa).

GTP is bound by residues 108 to 115 (GLQGAGKT), 191 to 195 (DTAGR), and 249 to 252 (TKLD).

This sequence belongs to the GTP-binding SRP family. SRP54 subfamily. Part of the signal recognition particle protein translocation system, which is composed of SRP and FtsY. Interacts with a small cytoplasmic RNA (sc-RNA).

It is found in the cytoplasm. It carries out the reaction GTP + H2O = GDP + phosphate + H(+). Involved in targeting and insertion of nascent membrane proteins into the cytoplasmic membrane. Binds to the hydrophobic signal sequence of the ribosome-nascent chain (RNC) as it emerges from the ribosomes. The SRP-RNC complex is then targeted to the cytoplasmic membrane where it interacts with the SRP receptor FtsY. Interaction with FtsY leads to the transfer of the RNC complex to the Sec translocase for insertion into the membrane, the hydrolysis of GTP by both Ffh and FtsY, and the dissociation of the SRP-FtsY complex into the individual components. This is Signal recognition particle protein from Bacillus subtilis (strain 168).